Consider the following 464-residue polypeptide: Endo-1,4-beta-xylanase A (464 aa).

An N-terminal signal peptide occupies residues 1–33 (MFRHHPTRGRRTAGLLAAALATLSAGLTAVAPA). The GH10 domain maps to 40–349 (TATLGELAEA…KPAYHAIAAA (310 aa)). Glutamate 166 (proton donor) is an active-site residue. The active-site Nucleophile is glutamate 271. Positions 354 to 457 (SPAPGGNCTA…TPADVTCTPG (104 aa)) constitute a CBM2 domain.

Belongs to the glycosyl hydrolase 10 (cellulase F) family. Does not require any standard metal (Mg(2+), Mn2(+), Ca(2+)). serves as cofactor.

It catalyses the reaction Endohydrolysis of (1-&gt;4)-beta-D-xylosidic linkages in xylans.. It participates in glycan degradation; xylan degradation. Completely inhibited by Hg(2+), unaffected by EDTA. Contributes to hydrolysis of hemicellulose, the major component of plant cell-walls. Hydrolyzes xylan to xylose and xylobiose. The sequence is that of Endo-1,4-beta-xylanase A (xynAS9) from Streptomyces sp.